The chain runs to 115 residues: uncharacterized protein (115 aa).

The first 26 residues, 1–26, serve as a signal peptide directing secretion; sequence MNFKKTVVSALSISALALSVSGVASA. The region spanning 36–114 is the BIG2 domain; it reads VKNISISPTH…AVFGKVYVTV (79 aa).

This is an uncharacterized protein from Bacillus subtilis (strain 168).